Reading from the N-terminus, the 334-residue chain is MIEADRLIAPISNHFKDEEVIDRAIRPKKLADYQGQDHVRDQMEIFIQAAQMRQEALDHLLIFGPPGLGKTTLANIVANEMGVNIRTTSGPVLEKAGDLAALLTNLEENDVLFIDEIHRLSPMVEEVLYPAMEDYQLDIMIGEGPAARSIKIDLPPFTLIGATTRAGSLTSPLRDRFGIVQRLEYYKVADLQHIVQRSAQCLGLSMDSEGALEVARRARGTPRIANRLLRRVRDYAEVKGDGHICAQTADRALNMLDVDHQGFDYMDRKLLLAIMEKFSGGPVGIDNLAAAIGEEKDTIEDVLEPFLIQQGYLQRTPRGRIATDRAYLHFGIEK.

Residues 4–186 are large ATPase domain (RuvB-L); the sequence is ADRLIAPISN…FGIVQRLEYY (183 aa). Residues Ile25, Arg26, Gly67, Lys70, Thr71, Thr72, 133–135, Arg176, Tyr186, and Arg223 each bind ATP; that span reads EDY. Thr71 serves as a coordination point for Mg(2+). A small ATPAse domain (RuvB-S) region spans residues 187–257; that stretch reads KVADLQHIVQ…TADRALNMLD (71 aa). The segment at 260–334 is head domain (RuvB-H); the sequence is HQGFDYMDRK…RAYLHFGIEK (75 aa). 2 residues coordinate DNA: Arg315 and Arg320.

Belongs to the RuvB family. In terms of assembly, homohexamer. Forms an RuvA(8)-RuvB(12)-Holliday junction (HJ) complex. HJ DNA is sandwiched between 2 RuvA tetramers; dsDNA enters through RuvA and exits via RuvB. An RuvB hexamer assembles on each DNA strand where it exits the tetramer. Each RuvB hexamer is contacted by two RuvA subunits (via domain III) on 2 adjacent RuvB subunits; this complex drives branch migration. In the full resolvosome a probable DNA-RuvA(4)-RuvB(12)-RuvC(2) complex forms which resolves the HJ.

Its subcellular location is the cytoplasm. It carries out the reaction ATP + H2O = ADP + phosphate + H(+). The RuvA-RuvB-RuvC complex processes Holliday junction (HJ) DNA during genetic recombination and DNA repair, while the RuvA-RuvB complex plays an important role in the rescue of blocked DNA replication forks via replication fork reversal (RFR). RuvA specifically binds to HJ cruciform DNA, conferring on it an open structure. The RuvB hexamer acts as an ATP-dependent pump, pulling dsDNA into and through the RuvAB complex. RuvB forms 2 homohexamers on either side of HJ DNA bound by 1 or 2 RuvA tetramers; 4 subunits per hexamer contact DNA at a time. Coordinated motions by a converter formed by DNA-disengaged RuvB subunits stimulates ATP hydrolysis and nucleotide exchange. Immobilization of the converter enables RuvB to convert the ATP-contained energy into a lever motion, pulling 2 nucleotides of DNA out of the RuvA tetramer per ATP hydrolyzed, thus driving DNA branch migration. The RuvB motors rotate together with the DNA substrate, which together with the progressing nucleotide cycle form the mechanistic basis for DNA recombination by continuous HJ branch migration. Branch migration allows RuvC to scan DNA until it finds its consensus sequence, where it cleaves and resolves cruciform DNA. The polypeptide is Holliday junction branch migration complex subunit RuvB (Vibrio cholerae serotype O1 (strain ATCC 39315 / El Tor Inaba N16961)).